A 352-amino-acid chain; its full sequence is Protein Wnt-3a (352 aa).

A signal peptide spans 1-18; sequence MAPLGYFLLLCSLKQALG. 11 cysteine pairs are disulfide-bonded: Cys77/Cys88, Cys128/Cys136, Cys138/Cys155, Cys203/Cys217, Cys205/Cys212, Cys281/Cys312, Cys297/Cys307, Cys311/Cys351, Cys327/Cys342, Cys329/Cys339, and Cys334/Cys335. N-linked (GlcNAc...) asparagine glycosylation is present at Asn87. Residue Ser209 is the site of O-palmitoleoyl serine; by PORCN attachment. An N-linked (GlcNAc...) asparagine glycan is attached at Asn298.

It belongs to the Wnt family. As to quaternary structure, forms a soluble 1:1 complex with AFM; this prevents oligomerization and is required for prolonged biological activity. The complex with AFM may represent the physiological form in body fluids. Homooligomer; disulfide-linked, leading to inactivation. Interacts with PORCN. Interacts with APCDD1 and WLS. Component of the Wnt-Fzd-LRP5-LRP6 signaling complex that contains a WNT protein, a FZD protein and LRP5 or LRP6. Interacts directly in the complex with LRP6. Interacts with glypican GPC3. Interacts with PKD1 (via extracellular domain). Interacts with FZD5. Post-translationally, palmitoleoylation by PORCN is required for efficient binding to frizzled receptors. Palmitoleoylation is required for proper trafficking to cell surface, vacuolar acidification is critical to release palmitoleoylated WNT3A from WLS in secretory vesicles. Depalmitoleoylated by NOTUM, leading to inhibit Wnt signaling pathway, possibly by promoting disulfide bond formation and oligomerization. Proteolytic processing by TIKI1 and TIKI2 promotes oxidation and formation of large disulfide-bond oligomers, leading to inactivation of WNT3A. In terms of processing, disulfide bonds have critical and distinct roles in secretion and activity. Loss of each conserved cysteine in WNT3A results in high molecular weight oxidized Wnt oligomers, which are formed through inter-Wnt disulfide bonding. In terms of tissue distribution, moderately expressed in placenta and at low levels in adult lung, spleen, and prostate.

Its subcellular location is the secreted. It is found in the extracellular space. It localises to the extracellular matrix. Functionally, ligand for members of the frizzled family of seven transmembrane receptors. Functions in the canonical Wnt signaling pathway that results in activation of transcription factors of the TCF/LEF family. Required for normal embryonic mesoderm development and formation of caudal somites. Required for normal morphogenesis of the developing neural tube. Mediates self-renewal of the stem cells at the bottom on intestinal crypts (in vitro). The chain is Protein Wnt-3a (WNT3A) from Homo sapiens (Human).